The following is a 919-amino-acid chain: Kinesin-like protein KIN-UA (919 aa).

Positions methionine 1–proline 68 are disordered. A compositionally biased stretch (low complexity) spans glycine 15–alanine 51. The segment covering leucine 52–glycine 66 has biased composition (gly residues). One can recognise a Kinesin motor domain in the interval arginine 70–valine 412. Residue glycine 155–threonine 162 participates in ATP binding. Residues threonine 286–lysine 305 form a disordered region. The segment covering serine 291–threonine 301 has biased composition (polar residues). Residues arginine 382–glycine 390 carry the D-BOX motif. 2 coiled-coil regions span residues serine 428–lysine 492 and alanine 530–histidine 621. ARM repeat units lie at residues lysine 650–alanine 689, glutamate 691–methionine 731, glutamate 733–glycine 773, and aspartate 775–lysine 814.

The protein belongs to the TRAFAC class myosin-kinesin ATPase superfamily. Kinesin family. Ungrouped subfamily. As to quaternary structure, interacts (via C-terminus) with NEK5. As to expression, expressed in leaves, guard cells, trichomes, vascular tissues, stele of the root tip region and columella cells. Highest expression detected in guard cells.

It localises to the cytoplasm. The protein localises to the cytoskeleton. The polypeptide is Kinesin-like protein KIN-UA (Arabidopsis thaliana (Mouse-ear cress)).